We begin with the raw amino-acid sequence, 237 residues long: Protein GrpE (237 aa).

Disordered regions lie at residues 1 to 52 and 200 to 237; these read MSGD…RLQQ and KVSM…EPGV. Over residues 27-40 the composition is skewed to polar residues; the sequence is ASMNSDEGQPSAQS. A compositionally biased stretch (low complexity) spans 204 to 218; sequence GPGPQSGASPSSAQS.

The protein belongs to the GrpE family. As to quaternary structure, homodimer.

It localises to the cytoplasm. Its function is as follows. Participates actively in the response to hyperosmotic and heat shock by preventing the aggregation of stress-denatured proteins, in association with DnaK and GrpE. It is the nucleotide exchange factor for DnaK and may function as a thermosensor. Unfolded proteins bind initially to DnaJ; upon interaction with the DnaJ-bound protein, DnaK hydrolyzes its bound ATP, resulting in the formation of a stable complex. GrpE releases ADP from DnaK; ATP binding to DnaK triggers the release of the substrate protein, thus completing the reaction cycle. Several rounds of ATP-dependent interactions between DnaJ, DnaK and GrpE are required for fully efficient folding. This chain is Protein GrpE, found in Prochlorococcus marinus (strain MIT 9303).